We begin with the raw amino-acid sequence, 203 residues long: Outer-membrane lipoprotein LolB (203 aa).

The signal sequence occupies residues 1-22 (MPVNLNHTLLLCLLVAASLLSG). C23 is lipidated: N-palmitoyl cysteine. A lipid anchor (S-diacylglycerol cysteine) is attached at C23.

The protein belongs to the LolB family. Monomer.

It is found in the cell outer membrane. Plays a critical role in the incorporation of lipoproteins in the outer membrane after they are released by the LolA protein. The chain is Outer-membrane lipoprotein LolB from Shewanella denitrificans (strain OS217 / ATCC BAA-1090 / DSM 15013).